A 650-amino-acid chain; its full sequence is Threonine--tRNA ligase, chloroplastic/mitochondrial 2 (650 aa).

Zn(2+) contacts are provided by Cys347, His398, and His524.

It belongs to the class-II aminoacyl-tRNA synthetase family.

The protein resides in the plastid. It localises to the chloroplast. It is found in the mitochondrion. The catalysed reaction is tRNA(Thr) + L-threonine + ATP = L-threonyl-tRNA(Thr) + AMP + diphosphate + H(+). This Arabidopsis thaliana (Mouse-ear cress) protein is Threonine--tRNA ligase, chloroplastic/mitochondrial 2.